Here is a 206-residue protein sequence, read N- to C-terminus: Somatotropin (206 aa).

Residues 1–18 (MLDRVVVLLSVLCLGVSS) form the signal peptide. Gln19 bears the Pyrrolidone carboxylic acid mark. His37 is a Zn(2+) binding site. The cysteines at positions 70 and 179 are disulfide-linked. Zn(2+) is bound at residue Glu188. A disulfide bond links Cys196 and Cys204.

Belongs to the somatotropin/prolactin family.

It is found in the secreted. In terms of biological role, growth hormone plays an important role in growth control and is involved in the regulation of several anabolic processes. Implicated as an osmoregulatory substance important for seawater adaptation. This Pseudocaranx dentex (White trevally) protein is Somatotropin (gh).